The primary structure comprises 147 residues: MFNMNINSPVRFVKETNRAKSPTRQSPYAAGYDLYSAYYYTIPPGERQLIKTDISMSMPKFCYGRIAPRSGLSLKGIDIGGGVIDEDYRGNIGVILINNGKCTFNVNTGDRIAQLIYQRIYYPELKEVQSLDSTDRGDQGFGSTGLR.

Arg24 lines the Mg(2+) pocket. Residues 68–70 (PRS), 82–85 (GVID), Tyr88, Gly93, Ile95, and Arg111 each bind dUTP.

This sequence belongs to the dUTPase family. Mg(2+) serves as cofactor.

The enzyme catalyses dUTP + H2O = dUMP + diphosphate + H(+). Functionally, this enzyme is involved in nucleotide metabolism: it produces dUMP, the immediate precursor of thymidine nucleotides and it decreases the intracellular concentration of dUTP so that uracil cannot be incorporated into DNA. This Camelus protein is Deoxyuridine 5'-triphosphate nucleotidohydrolase (OPG046).